The sequence spans 182 residues: CASP-like protein 2B1 (182 aa).

Topologically, residues 1 to 12 (MKLIDRRMRLTE) are cytoplasmic. A helical transmembrane segment spans residues 13–31 (LLLRCSISVFALLALILVV). Residues 32–52 (TDTEVKLIFTIKKTAKYTDMK) are Extracellular-facing. A helical transmembrane segment spans residues 53-73 (AVVFLVVANGIAAVYSLLQSV). Over 74–89 (RCVVGTMKGRVLFSKP) the chain is Cytoplasmic. The chain crosses the membrane as a helical span at residues 90-110 (LAWAFFSGDQAMAYLNVAAIA). The Extracellular segment spans residues 111–141 (ATAESGVIAREGEEDLQWMRVCNMYGKFCNQ). Residues 142-162 (MAIGVSSALLASIAMVFVSCI) form a helical membrane-spanning segment. Residues 163-182 (SAFSLFRLYGATRDRRTTPW) are Cytoplasmic-facing.

It belongs to the Casparian strip membrane proteins (CASP) family. As to quaternary structure, homodimer and heterodimers.

Its subcellular location is the cell membrane. In Arabidopsis lyrata subsp. lyrata (Lyre-leaved rock-cress), this protein is CASP-like protein 2B1.